A 301-amino-acid polypeptide reads, in one-letter code: Ribosomal protein L11 methyltransferase (301 aa).

The S-adenosyl-L-methionine site is built by Thr152, Gly173, Asp195, and Asn236.

This sequence belongs to the methyltransferase superfamily. PrmA family.

The protein resides in the cytoplasm. It catalyses the reaction L-lysyl-[protein] + 3 S-adenosyl-L-methionine = N(6),N(6),N(6)-trimethyl-L-lysyl-[protein] + 3 S-adenosyl-L-homocysteine + 3 H(+). Its function is as follows. Methylates ribosomal protein L11. The chain is Ribosomal protein L11 methyltransferase from Dictyoglomus thermophilum (strain ATCC 35947 / DSM 3960 / H-6-12).